Consider the following 239-residue polypeptide: Hexuronic acid methyltransferase AglP (239 aa).

Belongs to the FkbM methyltransferase family.

It is found in the cytoplasm. It participates in cell surface structure biogenesis; S-layer biogenesis. Functionally, involved in the assembly of a N-linked pentasaccharide that decorates the S-layer glycoprotein and flagellins. S-adenosyl-L-methionine-dependent methyltransferase that modifies the hexuronic acid found at position 4 of the pentasaccharide. In Haloferax volcanii (strain ATCC 29605 / DSM 3757 / JCM 8879 / NBRC 14742 / NCIMB 2012 / VKM B-1768 / DS2) (Halobacterium volcanii), this protein is Hexuronic acid methyltransferase AglP (aglP).